The following is a 141-amino-acid chain: Hemoglobin subunit alpha-2 (141 aa).

N-acetylserine is present on Ser-1. The Globin domain occupies 1–141 (SLSTKDKETV…LARALSEKYR (141 aa)). His-59 contacts O2. His-88 lines the heme b pocket.

The protein belongs to the globin family. In terms of assembly, hb2 is a heterotetramer of two alpha-2 chains and two beta chains. As to expression, red blood cells.

Involved in oxygen transport from gills to the various peripheral tissues. The polypeptide is Hemoglobin subunit alpha-2 (hba2) (Notothenia angustata (Rockcod)).